The sequence spans 99 residues: Leydig cell tumor 10 kDa protein homolog (99 aa).

The tract at residues 1 to 37 (MAQGQRKFQARKPAKSKTAATASEKNRGPRKGGRVIA) is disordered. A compositionally biased stretch (basic residues) spans 28–37 (GPRKGGRVIA).

This sequence belongs to the UPF0390 family.

Functionally, may have a potential role in hypercalcemia of malignancy. The sequence is that of Leydig cell tumor 10 kDa protein homolog from Pongo abelii (Sumatran orangutan).